The chain runs to 291 residues: N-acetylmannosamine kinase (291 aa).

ATP contacts are provided by residues 5 to 12 (AIDIGGTK) and 132 to 139 (GVGGGVVS). Positions 156, 166, 168, and 173 each coordinate Zn(2+).

The protein belongs to the ROK (NagC/XylR) family. NanK subfamily. Homodimer.

The enzyme catalyses an N-acyl-D-mannosamine + ATP = an N-acyl-D-mannosamine 6-phosphate + ADP + H(+). It participates in amino-sugar metabolism; N-acetylneuraminate degradation; D-fructose 6-phosphate from N-acetylneuraminate: step 2/5. Catalyzes the phosphorylation of N-acetylmannosamine (ManNAc) to ManNAc-6-P. This is N-acetylmannosamine kinase from Escherichia coli (strain K12 / MC4100 / BW2952).